Consider the following 312-residue polypeptide: Acetaldehyde dehydrogenase 4 (312 aa).

12-15 lines the NAD(+) pocket; sequence SGNI. Cys132 functions as the Acyl-thioester intermediate in the catalytic mechanism. Residues 163-171 and Asn290 contribute to the NAD(+) site; that span reads SAGPGTRAN.

Belongs to the acetaldehyde dehydrogenase family.

It carries out the reaction acetaldehyde + NAD(+) + CoA = acetyl-CoA + NADH + H(+). The protein is Acetaldehyde dehydrogenase 4 of Azotobacter vinelandii (strain DJ / ATCC BAA-1303).